A 200-amino-acid polypeptide reads, in one-letter code: Lipopolysaccharide core heptose(II)-phosphate phosphatase (200 aa).

The signal sequence occupies residues 1–25 (MLAFCRSSLKSKKYFIILLALAAIA).

Belongs to the phosphoglycerate mutase family. Ais subfamily.

It localises to the periplasm. It functions in the pathway bacterial outer membrane biogenesis; lipopolysaccharide metabolism. Its function is as follows. Catalyzes the dephosphorylation of heptose(II) of the outer membrane lipopolysaccharide core. The protein is Lipopolysaccharide core heptose(II)-phosphate phosphatase of Escherichia coli O157:H7 (strain EC4115 / EHEC).